A 260-amino-acid polypeptide reads, in one-letter code: Exosome complex component Rrp42 (260 aa).

The protein belongs to the RNase PH family. Rrp42 subfamily. As to quaternary structure, component of the archaeal exosome complex. Forms a hexameric ring-like arrangement composed of 3 Rrp41-Rrp42 heterodimers. The hexameric ring associates with a trimer of Rrp4 and/or Csl4 subunits.

The protein localises to the cytoplasm. Non-catalytic component of the exosome, which is a complex involved in RNA degradation. Contributes to the structuring of the Rrp41 active site. This chain is Exosome complex component Rrp42, found in Thermoplasma volcanium (strain ATCC 51530 / DSM 4299 / JCM 9571 / NBRC 15438 / GSS1).